Consider the following 586-residue polypeptide: Major facilitator superfamily domain-containing protein 6-like (586 aa).

The next 2 membrane-spanning stretches (helical) occupy residues 50 to 70 (TLMG…AFLA) and 78 to 98 (ALLI…VLVP). Positions 133-160 (AQESASSHPAKRTAEVEMPGFRNPPGES) are disordered. The next 9 helical transmembrane spans lie at 246 to 266 (FILS…LEQV), 287 to 307 (LWVW…ALVG), 326 to 346 (GYSV…IPIC), 361 to 381 (IVGG…VGAI), 400 to 420 (ELVM…LHPF), 433 to 455 (LVGL…WSWW), 456 to 476 (SVLP…WAVG), 499 to 519 (FYGS…MRFS), and 521 to 541 (AVLY…LLSI).

It belongs to the major facilitator superfamily. MFSD6 family.

It is found in the membrane. This Homo sapiens (Human) protein is Major facilitator superfamily domain-containing protein 6-like (MFSD6L).